A 638-amino-acid chain; its full sequence is 1-deoxy-D-xylulose-5-phosphate synthase (638 aa).

Thiamine diphosphate-binding positions include histidine 71 and serine 112 to alanine 114. Residue aspartate 144 coordinates Mg(2+). Residues glycine 145–alanine 146, asparagine 173, tyrosine 284, and glutamate 365 each bind thiamine diphosphate. Asparagine 173 contacts Mg(2+).

Belongs to the transketolase family. DXPS subfamily. As to quaternary structure, homodimer. The cofactor is Mg(2+). Thiamine diphosphate is required as a cofactor.

The enzyme catalyses D-glyceraldehyde 3-phosphate + pyruvate + H(+) = 1-deoxy-D-xylulose 5-phosphate + CO2. It functions in the pathway metabolic intermediate biosynthesis; 1-deoxy-D-xylulose 5-phosphate biosynthesis; 1-deoxy-D-xylulose 5-phosphate from D-glyceraldehyde 3-phosphate and pyruvate: step 1/1. Its function is as follows. Catalyzes the acyloin condensation reaction between C atoms 2 and 3 of pyruvate and glyceraldehyde 3-phosphate to yield 1-deoxy-D-xylulose-5-phosphate (DXP). The polypeptide is 1-deoxy-D-xylulose-5-phosphate synthase (Mycobacterium sp. (strain KMS)).